The chain runs to 610 residues: MPNIEELKQRQEKIRNFSIIAHIDHGKSTLADRILEKTETVSSREMQAQLLDSMDLERERGITIKLNAIELNYKAKDGETYIFHLIDTPGHVDFTYEVSRSLAACEGAILVVDAAQGIEAQTLANVYLALDNDLEILPVINKIDLPAADPERVRTEIEDVIGLDASEAVLASAKAGIGIEEILEQIVEKVPAPQGDVEAPLQALIFDSVYDAYRGVILQVRVVNGMVKTGDKIQMMSNGKTFDVTEVGIFTPKAVGRDYLATGDVGYVAASIKTVADTRVGDTVTLADNPAAEPLHGYKQMNPMVFAGLYPIESNKYNDLREALEKLQLNDASLQFEPETSQALGFGFRCGFLGLLHMDVIQERLEREFNIDLIMTAPSVVYHVNTTDGEMLEVSNPSEFPDPTRIDTIEEPYVKAQIMVPQEYVGAVMELAQRKRGDFETMEYIDDNRVNVIYQIPLAEIVFDFFDKLKSSTRGYASFDYELSEYRRSQLVKMDILLNGDKVDALSFIVHREFAYERGKLIVDKLKKIIPRQQFEVPIQAAIGQKIVARTDIKALRKNVLAKCYGGDVSRKRKLLEKQKAGKKRMKAIGSVEVPQEAFLSVLSMDEDEK.

Residues 12-194 (EKIRNFSIIA…QIVEKVPAPQ (183 aa)) form the tr-type G domain. GTP is bound by residues 24 to 29 (DHGKST) and 141 to 144 (NKID).

It belongs to the TRAFAC class translation factor GTPase superfamily. Classic translation factor GTPase family. LepA subfamily.

The protein resides in the cell membrane. The catalysed reaction is GTP + H2O = GDP + phosphate + H(+). Functionally, required for accurate and efficient protein synthesis under certain stress conditions. May act as a fidelity factor of the translation reaction, by catalyzing a one-codon backward translocation of tRNAs on improperly translocated ribosomes. Back-translocation proceeds from a post-translocation (POST) complex to a pre-translocation (PRE) complex, thus giving elongation factor G a second chance to translocate the tRNAs correctly. Binds to ribosomes in a GTP-dependent manner. In Streptococcus thermophilus (strain ATCC BAA-250 / LMG 18311), this protein is Elongation factor 4.